A 330-amino-acid polypeptide reads, in one-letter code: Glycine betaine/proline betaine-binding periplasmic protein (330 aa).

An N-terminal signal peptide occupies residues 1 to 21 (MRHSVLFATAFATLISTQTFA). Residues Trp-86, His-90, and 161 to 163 (WGC) each bind substrate. Residues Cys-157 and Cys-163 are joined by a disulfide bond.

The complex is composed of two ATP-binding proteins (ProV), two transmembrane proteins (ProW) and a solute-binding protein (ProX).

Its subcellular location is the periplasm. Part of the ProU ABC transporter complex involved in glycine betaine and proline betaine uptake. Binds glycine betaine and proline betaine with high affinity. This Escherichia coli (strain K12) protein is Glycine betaine/proline betaine-binding periplasmic protein.